We begin with the raw amino-acid sequence, 277 residues long: Indole-3-glycerol phosphate synthase (277 aa).

This sequence belongs to the TrpC family.

The enzyme catalyses 1-(2-carboxyphenylamino)-1-deoxy-D-ribulose 5-phosphate + H(+) = (1S,2R)-1-C-(indol-3-yl)glycerol 3-phosphate + CO2 + H2O. Its pathway is amino-acid biosynthesis; L-tryptophan biosynthesis; L-tryptophan from chorismate: step 4/5. The polypeptide is Indole-3-glycerol phosphate synthase (Pseudomonas putida (strain ATCC 700007 / DSM 6899 / JCM 31910 / BCRC 17059 / LMG 24140 / F1)).